Here is a 346-residue protein sequence, read N- to C-terminus: Phosphoribosylformylglycinamidine cyclo-ligase (346 aa).

The protein belongs to the AIR synthase family.

It is found in the cytoplasm. It carries out the reaction 2-formamido-N(1)-(5-O-phospho-beta-D-ribosyl)acetamidine + ATP = 5-amino-1-(5-phospho-beta-D-ribosyl)imidazole + ADP + phosphate + H(+). It functions in the pathway purine metabolism; IMP biosynthesis via de novo pathway; 5-amino-1-(5-phospho-D-ribosyl)imidazole from N(2)-formyl-N(1)-(5-phospho-D-ribosyl)glycinamide: step 2/2. The protein is Phosphoribosylformylglycinamidine cyclo-ligase of Polaromonas sp. (strain JS666 / ATCC BAA-500).